Consider the following 317-residue polypeptide: Neuroguidin-A (317 aa).

Disordered regions lie at residues 125–170 and 280–317; these read ENDP…SKVK and SALT…RRRH. A compositionally biased stretch (acidic residues) spans 146–157; that stretch reads DERESDSGEEGA. A compositionally biased stretch (basic residues) spans 297–317; it reads KKSKKGPKKSKKKKGFSRRRH.

This sequence belongs to the SAS10 family. As to quaternary structure, part of the small subunit (SSU) processome, composed of more than 70 proteins and the RNA chaperone small nucleolar RNA (snoRNA) U3.

It localises to the nucleus. The protein resides in the nucleolus. Its subcellular location is the chromosome. The protein localises to the centromere. It is found in the cytoplasm. It localises to the cell projection. The protein resides in the axon. Its subcellular location is the dendrite. The protein localises to the filopodium. In terms of biological role, part of the small subunit (SSU) processome, first precursor of the small eukaryotic ribosomal subunit. During the assembly of the SSU processome in the nucleolus, many ribosome biogenesis factors, an RNA chaperone and ribosomal proteins associate with the nascent pre-rRNA and work in concert to generate RNA folding, modifications, rearrangements and cleavage as well as targeted degradation of pre-ribosomal RNA by the RNA exosome. Its dissociation from the complex determines the transition from state pre-A1 to state pre-A1*. May inhibit mRNA translation. This Xenopus laevis (African clawed frog) protein is Neuroguidin-A (ngdn-a).